The following is a 242-amino-acid chain: Protein GrpE (242 aa).

The span at 1-10 shows a compositional bias: polar residues; that stretch reads MAGENSSTET. Residues 1-64 are disordered; sequence MAGENSSTET…QSTESTSKEK (64 aa). Residues 11 to 20 are compositionally biased toward basic and acidic residues; that stretch reads KNQEINEKTP. Composition is skewed to polar residues over residues 21–32 and 40–59; these read EVQTFETNVEFE and DTEL…STES.

This sequence belongs to the GrpE family. As to quaternary structure, homodimer.

It is found in the cytoplasm. Participates actively in the response to hyperosmotic and heat shock by preventing the aggregation of stress-denatured proteins, in association with DnaK and GrpE. It is the nucleotide exchange factor for DnaK and may function as a thermosensor. Unfolded proteins bind initially to DnaJ; upon interaction with the DnaJ-bound protein, DnaK hydrolyzes its bound ATP, resulting in the formation of a stable complex. GrpE releases ADP from DnaK; ATP binding to DnaK triggers the release of the substrate protein, thus completing the reaction cycle. Several rounds of ATP-dependent interactions between DnaJ, DnaK and GrpE are required for fully efficient folding. This Trichodesmium erythraeum (strain IMS101) protein is Protein GrpE.